Here is a 1150-residue protein sequence, read N- to C-terminus: MSQRDAKKDGLLYTTNGVSPTPPKRIPVPSRQNKIEENSTTKNFPHSRHTSTVAGTEGGSSLSRRHTSAESRKALPNQQQLAQSGLLNKEEQQSLKRSDTSVFPKAVRKVSSSKICASCGQVISGQYVRALGNIYHLECFRCHDCNSLVASKFFPIDDPTLNKQVPLCETDYFRRLDLLCASCGMALRGYYITALNKKFHIEHFTCSLCYTVFGPNDSYYEYEGKVYCHYHYSTLFAARCCGCDGPILRQFVEVYRNGVSQNWHVPCHMIYKFWNVKLCQKTSIETSKKKDSELSQSQLRKREKHLEQKIFHIWHALSYFEEYTASCISDMLLLVSNGEFTKSVICAQKFIRYIEILFKGIDSLETILSSFHAKSMPYVREAKLLCKKLVSIFALLAKCHNSDIRDVAIVQDFLSLFTGLAHYLKLLIRISLTGGLRLEQDHACKHALPQFLQTVEEARFVDQEGYDSSSFDMPLNLANASSDLCYVCHSALEEDCVLLGEIRCHIGCLSCTKCKYNNRENYDWARWNNQTKQIECYLCYTESSNVSNDEPHPSFEYVSRLSQYIYLLRIALVRLYTILMENNDSSQRKPLSVDPKQENVSSTVETAKQAETTASSDSFRKYANTLNDLRHLKSSRNRKATSNETQSSSNSTETSKLSKNVSESGKDKSPHWHSHGGSITGKSIVEQASSPLERRMDAFDENRAFTLDDIPKVISEQRNREHRPNAFRHMPSYTDPSYRKNSGAIYDKNDGTQKGLTPKSEDAPIRYLSDLSNLELLFTKHVAVLILHPLVRDYYSLDELMEMSDLRKGGFWEKFGKAFKGKDAEKKNVKKKGTFGVPLEILVERNNAQSTVGTGVGVKHIPAFIGNTLAAMKRKDMSVVGVFRKNGNIRRLKELSDMLDVSPDSIDYEQETPIQLAALLKKFLRELPDPLLTFKLFGLFITSSKLESEEERMRVLHLTICLLPKGHRDTMEVIFGFLYWVASFSHIDDEVGSKMDIHNLATVITPNILYSKSNDPVDESFLAIEAVHLLIENFEKFCEVPREISLLLDDPTLFYNNAAWTSKELYKRCEEIISQMSLDERNTPKHTASTKRKRQPIRRVTTNLTSDVPSGSEVADTNSLSSTTKDEASPNSDAQPKPQVKPQHAVIRDS.

Positions 1–10 (MSQRDAKKDG) are enriched in basic and acidic residues. The segment at 1-78 (MSQRDAKKDG…AESRKALPNQ (78 aa)) is disordered. Over residues 40–62 (TTKNFPHSRHTSTVAGTEGGSSL) the composition is skewed to polar residues. LIM zinc-binding domains follow at residues 114–177 (KICA…RRLD), 178–238 (LLCA…LFAA), and 483–546 (DLCY…SSNV). Residues 586-683 (SQRKPLSVDP…SHGGSITGKS (98 aa)) are disordered. Polar residues predominate over residues 598-617 (ENVSSTVETAKQAETTASSD). A compositionally biased stretch (low complexity) spans 642–655 (SNETQSSSNSTETS). A Phosphoserine modification is found at Ser690. Residues 726–759 (AFRHMPSYTDPSYRKNSGAIYDKNDGTQKGLTPK) form a disordered region. A Rho-GAP domain is found at 837–1038 (VPLEILVERN…LLIENFEKFC (202 aa)). Disordered regions lie at residues 1078 to 1097 (LDERNTPKHTASTKRKRQPI) and 1104 to 1150 (LTSD…IRDS). Residues 1088–1097 (ASTKRKRQPI) show a composition bias toward basic residues. A compositionally biased stretch (polar residues) spans 1104–1134 (LTSDVPSGSEVADTNSLSSTTKDEASPNSDA).

The protein localises to the cell tip. It localises to the nucleus. Its function is as follows. GTPase-activating protein for Rho1. Involved in the F-actin patch localization, cell morphogenesis, regulation of septation, and cell wall synthesis. The polypeptide is Rho-type GTPase-activating protein 1 (rga1) (Schizosaccharomyces pombe (strain 972 / ATCC 24843) (Fission yeast)).